Consider the following 337-residue polypeptide: Nucleoid-associated protein HSM_0096 (337 aa).

This sequence belongs to the YejK family.

The protein resides in the cytoplasm. The protein localises to the nucleoid. The chain is Nucleoid-associated protein HSM_0096 from Histophilus somni (strain 2336) (Haemophilus somnus).